The sequence spans 467 residues: MRLYNTMTRTKEEFKPLKDKVVNMYVCGPTVYNYIHIGNARAFIVFDTVRRYLEYKGYTVNYVQNFTDIDDKIINRAKEENTTEKEIAERFIEEYFKDADALGIKRATVHPRATEHIDDIIEFIKILIDKGYAYVVDGNVYFETAKFKDYGKLSHKNIDELMAGARVEIDEKKKNPLDFALWKAQKPGEPAWDSPWGKGRPGWHIECSVMSTKYLGKTLDIHAGGPDLIFPHHENEIAQSEAAYDQPFSKYWMHIGYLNVNNEKMSKSKGNFFTVRELTEKYDPEVLRLFMLMAHYRSPINFSLDLLDQAKSAYERLSNAVVNLKHLANITKDRELSDEEKDLIVKFDEYKKQFEEAMDDDFNTADAISVLFEMAKTANANLSGNSSKKLVEYILEMFLKLSDVLGLSYKNAETEIEDEEILRLIEERQKARKEKNWKLADEIRDKLKERGIILEDTPEGVRWKRIR.

A Zn(2+)-binding site is contributed by C27. Positions 29 to 39 (PTVYNYIHIGN) match the 'HIGH' region motif. Zn(2+) is bound by residues C207, H232, and E236. Positions 264–268 (KMSKS) match the 'KMSKS' region motif. K267 is an ATP binding site.

Belongs to the class-I aminoacyl-tRNA synthetase family. As to quaternary structure, monomer. The cofactor is Zn(2+).

It localises to the cytoplasm. The enzyme catalyses tRNA(Cys) + L-cysteine + ATP = L-cysteinyl-tRNA(Cys) + AMP + diphosphate. The sequence is that of Cysteine--tRNA ligase from Caldanaerobacter subterraneus subsp. tengcongensis (strain DSM 15242 / JCM 11007 / NBRC 100824 / MB4) (Thermoanaerobacter tengcongensis).